A 254-amino-acid chain; its full sequence is Zinc transporter GufA (254 aa).

Transmembrane regions (helical) follow at residues 4–24 (GLVA…PVLV), 74–94 (VAAG…LMPH), 112–132 (ALLF…AVGV), 143–163 (LSVA…VALA), 176–196 (FLAL…VLAL), 198–218 (LSSA…LYVI), and 234–254 (EATT…MSLG). Zn(2+) contacts are provided by asparagine 123, glutamate 126, glutamine 152, asparagine 153, glutamate 156, and glutamate 185.

Belongs to the ZIP transporter (TC 2.A.5) family. As to quaternary structure, homodimer.

The protein resides in the cell inner membrane. Its function is as follows. Mediates the uptake of Zn(2+). The protein is Zinc transporter GufA (gufA) of Myxococcus xanthus.